A 274-amino-acid polypeptide reads, in one-letter code: NAD kinase (274 aa).

Asp61 functions as the Proton acceptor in the catalytic mechanism. NAD(+) contacts are provided by residues 61–62 (DG), Lys66, 134–135 (ND), Lys145, Asp164, and 175–180 (TAYSLS).

Belongs to the NAD kinase family. It depends on a divalent metal cation as a cofactor.

Its subcellular location is the cytoplasm. The enzyme catalyses NAD(+) + ATP = ADP + NADP(+) + H(+). Its function is as follows. Involved in the regulation of the intracellular balance of NAD and NADP, and is a key enzyme in the biosynthesis of NADP. Catalyzes specifically the phosphorylation on 2'-hydroxyl of the adenosine moiety of NAD to yield NADP. This is NAD kinase from Clostridium tetani (strain Massachusetts / E88).